Consider the following 402-residue polypeptide: Sex hormone-binding globulin (402 aa).

The signal sequence occupies residues 1–29 (MESRGPLATSRLLLLLLLLLLRHTRQGWA). T36 is a glycosylation site (O-linked (GalNAc...) threonine). Laminin G-like domains are found at residues 45-217 (VHLS…LRSC) and 224-390 (GIFL…THSC). 2 cysteine pairs are disulfide-bonded: C193–C217 and C362–C390. N-linked (GlcNAc...) asparagine glycosylation is found at N380 and N396.

In terms of assembly, homodimer. Post-translationally, variant Asn-356 contains one N-linked (GlcNAc...) at position 356. As to expression, isoform 1 and isoform 2 are present in liver and testis.

Its subcellular location is the secreted. Functions as an androgen transport protein, but may also be involved in receptor mediated processes. Each dimer binds one molecule of steroid. Specific for 5-alpha-dihydrotestosterone, testosterone, and 17-beta-estradiol. Regulates the plasma metabolic clearance rate of steroid hormones by controlling their plasma concentration. This chain is Sex hormone-binding globulin, found in Homo sapiens (Human).